The sequence spans 328 residues: Peroxidase 71 (328 aa).

An N-terminal signal peptide occupies residues 1 to 23; sequence MGLVRSLCLLITFLNCLIISVHG. 4 disulfide bridges follow: C44-C120, C77-C82, C126-C324, and C204-C235. The Proton acceptor role is filled by H75. Ca(2+) is bound by residues D76, V79, G81, D83, and S85. P167 contributes to the substrate binding site. Residue H197 coordinates heme b. Position 198 (T198) interacts with Ca(2+). N213 carries an N-linked (GlcNAc...) asparagine glycan. The Ca(2+) site is built by D248, S251, and D256. The N-linked (GlcNAc...) asparagine glycan is linked to N262.

The protein belongs to the peroxidase family. Classical plant (class III) peroxidase subfamily. Heme b is required as a cofactor. Ca(2+) serves as cofactor. Slightly expressed in roots.

Its subcellular location is the secreted. It carries out the reaction 2 a phenolic donor + H2O2 = 2 a phenolic radical donor + 2 H2O. Functionally, removal of H(2)O(2), oxidation of toxic reductants, biosynthesis and degradation of lignin, suberization, auxin catabolism, response to environmental stresses such as wounding, pathogen attack and oxidative stress. These functions might be dependent on each isozyme/isoform in each plant tissue. In Arabidopsis thaliana (Mouse-ear cress), this protein is Peroxidase 71 (PER71).